The chain runs to 335 residues: Dolichyl-diphosphooligosaccharide--protein glycosyltransferase subunit MAGT1 (335 aa).

A signal peptide spans 1–29 (MASPRWFWSVCAIAAVALLLVSKVPSASA). Topologically, residues 30–184 (QRKKEMVLSE…DVNIRVIRPP (155 aa)) are extracellular. Residues 47–175 (WANKRPVIRM…IARWIADRTD (129 aa)) form the Thioredoxin domain. N-linked (GlcNAc...) asparagine glycosylation occurs at Asn-71. A disulfide bond links Cys-87 and Cys-90. The chain crosses the membrane as a helical span at residues 185-205 (NYAGPLMLGLLLAVIGGLVYL). The Cytoplasmic portion of the chain corresponds to 206–209 (RRSN). The chain crosses the membrane as a helical span at residues 210 to 230 (MEFLFNKTGWAFAALCFVLAM). Topologically, residues 231–270 (TSGQMWNHIRGPPYAHKNPHTGHVNYIHGSSQAQFVAETH) are extracellular. Residues 271–291 (IVLLFNGGVTLGMVLLCEAAT) form a helical membrane-spanning segment. The Cytoplasmic portion of the chain corresponds to 292–300 (SDMDIGKRR). Residues 301–321 (MMCIAGIGLVVLFFSWMLSIF) form a helical membrane-spanning segment. The Extracellular segment spans residues 322–335 (RSKYHGYPYSFLMS).

The protein belongs to the OST3/OST6 family. Accessory component of the STT3B-containing form of the oligosaccharyltransferase (OST) complex. OST exists in two different complex forms which contain common core subunits RPN1, RPN2, OST48, OST4, DAD1 and TMEM258, either STT3A or STT3B as catalytic subunits, and form-specific accessory subunits. OST can form stable complexes with the Sec61 complex or with both the Sec61 and TRAP complexes. The association of TUSC3 or MAGT1 with the STT3B-containing complex seems to be mutually exclusvice. In terms of tissue distribution, expressed at high levels in kidney, colon, heart and liver. Expressed at lower levels in intestine, spleen, brain and lung.

The protein localises to the cell membrane. It localises to the endoplasmic reticulum. Its subcellular location is the endoplasmic reticulum membrane. It participates in protein modification; protein glycosylation. Its function is as follows. Accessory component of the STT3B-containing form of the N-oligosaccharyl transferase (OST) complex which catalyzes the transfer of a high mannose oligosaccharide from a lipid-linked oligosaccharide donor to an asparagine residue within an Asn-X-Ser/Thr consensus motif in nascent polypeptide chains. Involved in N-glycosylation of STT3B-dependent substrates. Specifically required for the glycosylation of a subset of acceptor sites that are near cysteine residues; in this function seems to act redundantly with TUSC3. In its oxidized form proposed to form transient mixed disulfides with a glycoprotein substrate to facilitate access of STT3B to the unmodified acceptor site. Also has oxidoreductase-independent functions in the STT3B-containing OST complex possibly involving substrate recognition. Could indirectly play a role in Mg(2+) transport in epithelial cells. The polypeptide is Dolichyl-diphosphooligosaccharide--protein glycosyltransferase subunit MAGT1 (Mus musculus (Mouse)).